The chain runs to 638 residues: 1-deoxy-D-xylulose-5-phosphate synthase (638 aa).

Thiamine diphosphate-binding positions include histidine 78 and glycine 119–serine 121. Residue aspartate 151 participates in Mg(2+) binding. Thiamine diphosphate contacts are provided by residues glycine 152–alanine 153, asparagine 180, tyrosine 289, and glutamate 371. Asparagine 180 serves as a coordination point for Mg(2+).

This sequence belongs to the transketolase family. DXPS subfamily. Homodimer. Requires Mg(2+) as cofactor. Thiamine diphosphate is required as a cofactor.

The catalysed reaction is D-glyceraldehyde 3-phosphate + pyruvate + H(+) = 1-deoxy-D-xylulose 5-phosphate + CO2. It functions in the pathway metabolic intermediate biosynthesis; 1-deoxy-D-xylulose 5-phosphate biosynthesis; 1-deoxy-D-xylulose 5-phosphate from D-glyceraldehyde 3-phosphate and pyruvate: step 1/1. Catalyzes the acyloin condensation reaction between C atoms 2 and 3 of pyruvate and glyceraldehyde 3-phosphate to yield 1-deoxy-D-xylulose-5-phosphate (DXP). This is 1-deoxy-D-xylulose-5-phosphate synthase from Bartonella bacilliformis (strain ATCC 35685 / KC583 / Herrer 020/F12,63).